We begin with the raw amino-acid sequence, 283 residues long: Methylamine utilization protein MauF (283 aa).

Transmembrane regions (helical) follow at residues 37-57, 58-78, 116-136, 143-163, 187-207, 210-230, and 263-283; these read FALM…LHSA, MSAT…GGFL, GYAI…WLLF, YMVA…FGFM, IGLL…QTPI, IVTG…IIGI, and VEVD…LLVL.

It is found in the cell membrane. Its pathway is one-carbon metabolism; methylamine degradation. This chain is Methylamine utilization protein MauF (mauF), found in Methylobacillus flagellatus (strain ATCC 51484 / DSM 6875 / VKM B-1610 / KT).